The sequence spans 129 residues: UPF0047 protein Mb2586c (129 aa).

It belongs to the UPF0047 family.

This Mycobacterium bovis (strain ATCC BAA-935 / AF2122/97) protein is UPF0047 protein Mb2586c.